A 493-amino-acid polypeptide reads, in one-letter code: Probable protein phosphatase 2C 40 (493 aa).

The PPM-type phosphatase domain maps to 145–480 (LLSAMEVQVA…DDVTIMVITL (336 aa)). Positions 180, 181, 408, and 471 each coordinate Mn(2+).

It belongs to the PP2C family. Requires Mg(2+) as cofactor. Mn(2+) serves as cofactor.

It catalyses the reaction O-phospho-L-seryl-[protein] + H2O = L-seryl-[protein] + phosphate. The enzyme catalyses O-phospho-L-threonyl-[protein] + H2O = L-threonyl-[protein] + phosphate. This Arabidopsis thaliana (Mouse-ear cress) protein is Probable protein phosphatase 2C 40.